Here is an 81-residue protein sequence, read N- to C-terminus: Sulfur carrier protein TusA (81 aa).

The active-site Cysteine persulfide intermediate is Cys19.

The protein belongs to the sulfur carrier protein TusA family. In terms of assembly, interacts with IscS.

The protein resides in the cytoplasm. The protein operates within tRNA modification. Its function is as follows. Sulfur carrier protein involved in sulfur trafficking in the cell. Part of a sulfur-relay system required for 2-thiolation during synthesis of 2-thiouridine of the modified wobble base 5-methylaminomethyl-2-thiouridine (mnm(5)s(2)U) in tRNA. Interacts with IscS and stimulates its cysteine desulfurase activity. Accepts an activated sulfur from IscS, which is then transferred to TusD, and thus determines the direction of sulfur flow from IscS to 2-thiouridine formation. Also appears to be involved in sulfur transfer for the biosynthesis of molybdopterin. In Escherichia coli O17:K52:H18 (strain UMN026 / ExPEC), this protein is Sulfur carrier protein TusA.